Consider the following 170-residue polypeptide: Adenine phosphoribosyltransferase (170 aa).

The protein belongs to the purine/pyrimidine phosphoribosyltransferase family. In terms of assembly, homodimer.

Its subcellular location is the cytoplasm. The enzyme catalyses AMP + diphosphate = 5-phospho-alpha-D-ribose 1-diphosphate + adenine. Its pathway is purine metabolism; AMP biosynthesis via salvage pathway; AMP from adenine: step 1/1. In terms of biological role, catalyzes a salvage reaction resulting in the formation of AMP, that is energically less costly than de novo synthesis. This chain is Adenine phosphoribosyltransferase, found in Thermosipho africanus (strain TCF52B).